The primary structure comprises 302 residues: Trans-4-hydroxy-L-proline dehydratase activating enzyme (302 aa).

The Radical SAM core domain maps to 14–297 (HDGPGIRSTV…KRLFEASNFN (284 aa)). [4Fe-4S] cluster contacts are provided by Cys28, Cys32, Cys35, Cys54, Cys57, Cys60, and Cys93. Residue 34 to 36 (WCH) coordinates S-adenosyl-L-methionine. 4Fe-4S ferredoxin-type domains are found at residues 45-74 (KQVLYNEERCSKCEACINICPHKAIYKGET) and 75-103 (KICLDQDKCEFCETCLDYCVNNAREIVGQ). Residues Gly133, 183–185 (DIK), and His257 contribute to the S-adenosyl-L-methionine site.

It belongs to the organic radical-activating enzymes family. The cofactor is [4Fe-4S] cluster.

The enzyme catalyses glycyl-[protein] + reduced [flavodoxin] + S-adenosyl-L-methionine = glycin-2-yl radical-[protein] + semiquinone [flavodoxin] + 5'-deoxyadenosine + L-methionine + H(+). Functionally, catalyzes activation of the trans-4-hydroxy-L-proline dehydratase under anaerobic conditions by generation of an organic free radical on a glycine residue, via a homolytic cleavage of S-adenosyl-L-methionine (SAM). Is involved in the anaerobic degradation of 4-hydroxyproline. The sequence is that of Trans-4-hydroxy-L-proline dehydratase activating enzyme from Clostridioides difficile (Peptoclostridium difficile).